The primary structure comprises 339 residues: Catalase-related peroxidase (339 aa).

The signal sequence occupies residues Met1 to Ala31. His58 is an active-site residue. Residue Tyr328 coordinates heme.

This sequence belongs to the catalase family. It depends on heme as a cofactor.

It localises to the periplasm. Its function is as follows. Has an organic peroxide-dependent peroxidase activity. This Synechococcus elongatus (strain ATCC 33912 / PCC 7942 / FACHB-805) (Anacystis nidulans R2) protein is Catalase-related peroxidase (srpA).